The primary structure comprises 414 residues: MSAKRNTKLRHAPLEHAYVDDKSVRRNKRSKQRGRMQDDESVDAPLNEKQAQVIARQAQLQQNEEDVSDSEQTGQPVDIDVPSDDEGQADDLAQPEDAYRHFEIDEHDEVALRAFMPAEPAQRRTLADIIMEKIQGKRTEVASQVSQTGPRELNPKVIEVYQGVGQVLSRYRSGKLPKAFKIIPRLKNWEEIVYITEPENWTAASMYAATRLFASNLKEKMAQRFYNLILLPRVRDDIAEYKRLNFHLYQAIKKAIFKPGAFFKGFLLPLCEAGDCTLREAVIIGGILVRKSIPVLHSSAAMLKMAEMPYSGATSIFLRVLLDKKYSLPFRVVDAVVAHFYRFNADHRQLPVLWHQCLLVFVQRYKEDITSEQKRALLDVLRSHNHYAITPEIRRELVQSKSRDREMPLEESSR.

Residues 1–11 (MSAKRNTKLRH) show a composition bias toward basic residues. The segment at 1 to 91 (MSAKRNTKLR…PSDDEGQADD (91 aa)) is disordered. The span at 12 to 24 (APLEHAYVDDKSV) shows a compositional bias: basic and acidic residues. A compositionally biased stretch (basic residues) spans 25-34 (RRNKRSKQRG).

The protein belongs to the bystin family.

The protein localises to the nucleus. The protein resides in the nucleolus. Required for processing of 20S pre-rRNA precursor and biogenesis of 40S ribosomal subunits. This Monosiga brevicollis (Choanoflagellate) protein is Bystin (bysl).